The chain runs to 840 residues: Serotype-specific mannosyltransferase WbdA (840 aa).

The tract at residues 2 to 399 (HILIDVQGYQ…WANTAHLAIE (398 aa)) is alpha-(1-&gt;2)-mannosyltransferase. Positions 456 to 829 (KLLVDISVLA…WKQSAEFLLK (374 aa)) are alpha-(1-&gt;3)-mannosyltransferase.

Belongs to the glycosyltransferase group 1 family. Glycosyltransferase 4 subfamily. Monomer. Interacts with the C-terminal region of WbdD. Interacts with WbdD via a surface-exposed alpha-helix in the C-terminal mannosyltransferase domain. However, the C-terminal domain is unable to interact with WbdD in the absence of its N-terminal partner.

The protein localises to the cell inner membrane. It catalyses the reaction [alpha-D-Man-(1-&gt;3)-alpha-D-Man-(1-&gt;3)-alpha-D-Man-(1-&gt;2)-alpha-D-Man-(1-&gt;2)](n)-alpha-D-Man-(1-&gt;3)-alpha-D-Man-(1-&gt;3)-alpha-D-Man-(1-&gt;3)-alpha-D-GlcNAc-di-trans,octa-cis-undecaprenyl diphosphate + 2 GDP-alpha-D-mannose = alpha-D-Man-(1-&gt;2)-alpha-D-Man-(1-&gt;2)-[alpha-D-Man-(1-&gt;3)-alpha-D-Man-(1-&gt;3)-alpha-D-Man-(1-&gt;2)-alpha-D-Man-(1-&gt;2)](n)-alpha-D-Man-(1-&gt;3)-alpha-D-Man-(1-&gt;3)-alpha-D-Man-(1-&gt;3)-alpha-D-GlcNAc-di-trans,octa-cis-undecaprenyl diphosphate + 2 GDP + 2 H(+). The catalysed reaction is alpha-D-Man-(1-&gt;2)-alpha-D-Man-(1-&gt;2)-[alpha-D-Man-(1-&gt;3)-alpha-D-Man-(1-&gt;3)-alpha-D-Man-(1-&gt;2)-alpha-D-Man-(1-&gt;2)](n)-alpha-D-Man-(1-&gt;3)-alpha-D-Man-(1-&gt;3)-alpha-D-Man-(1-&gt;3)-alpha-D-GlcNAc-di-trans,octa-cis-undecaprenyl diphosphate + 2 GDP-alpha-D-mannose = [alpha-D-Man-(1-&gt;3)-alpha-D-Man-(1-&gt;3)-alpha-D-Man-(1-&gt;2)-alpha-D-Man-(1-&gt;2)](n+1)-alpha-D-Man-(1-&gt;3)-alpha-D-Man-(1-&gt;3)-alpha-D-Man-(1-&gt;3)-alpha-D-GlcNAc-di-trans,octa-cis-undecaprenyl diphosphate + 2 GDP + 2 H(+). It functions in the pathway bacterial outer membrane biogenesis; LPS O-antigen biosynthesis. Its activity is regulated as follows. The alpha-(1-&gt;2)-mannosyltransferase activity of the N-terminal domain is regulated by the activity of the C-terminal alpha-(1-&gt;3)-mannosyltransferase. The relative concentration of WbdA and WbdD is critical in determining the O polysaccharide (OPS) modal chain length. OPS chain length increases with increasing concentration of WbdA, but the maximum length does not increase beyond the wild-type modal length, despite substantial increases in WbdA concentration. Mannosyltransferase involved in the biosynthesis of the repeat unit of the lipopolysaccharide (LPS) O-antigen region. Catalyzes the polymerization of a tetrasaccharide repeat unit containing two alpha-(1-&gt;3)- and two alpha-(1-&gt;2)-linked mannopyranose residues. Extension is terminated by the action of the chain terminator bifunctional methyltransferase/kinase WbdD. In Escherichia coli, this protein is Serotype-specific mannosyltransferase WbdA.